The primary structure comprises 74 residues: UPF0154 protein LVIS_1358 (74 aa).

The chain crosses the membrane as a helical span at residues 4-24; sequence WIWILIVIVVGLACAAGGFYG.

It belongs to the UPF0154 family.

It localises to the cell membrane. This Levilactobacillus brevis (strain ATCC 367 / BCRC 12310 / CIP 105137 / JCM 1170 / LMG 11437 / NCIMB 947 / NCTC 947) (Lactobacillus brevis) protein is UPF0154 protein LVIS_1358.